A 421-amino-acid chain; its full sequence is UDP-N-acetylglucosamine 1-carboxyvinyltransferase (421 aa).

Position 22–23 (22–23 (KN)) interacts with phosphoenolpyruvate. Arg-93 is a UDP-N-acetyl-alpha-D-glucosamine binding site. The active-site Proton donor is the Cys-117. Position 117 is a 2-(S-cysteinyl)pyruvic acid O-phosphothioketal (Cys-117). Residues 122 to 126 (RPVDL), Asp-308, and Val-330 contribute to the UDP-N-acetyl-alpha-D-glucosamine site.

Belongs to the EPSP synthase family. MurA subfamily.

Its subcellular location is the cytoplasm. It catalyses the reaction phosphoenolpyruvate + UDP-N-acetyl-alpha-D-glucosamine = UDP-N-acetyl-3-O-(1-carboxyvinyl)-alpha-D-glucosamine + phosphate. It functions in the pathway cell wall biogenesis; peptidoglycan biosynthesis. Its function is as follows. Cell wall formation. Adds enolpyruvyl to UDP-N-acetylglucosamine. This is UDP-N-acetylglucosamine 1-carboxyvinyltransferase from Azotobacter vinelandii (strain DJ / ATCC BAA-1303).